Reading from the N-terminus, the 122-residue chain is MARIAGIDLPRNKRIEVALTYIYGIGRSSSQDILQKAGVDPNTRTDELTEAEAGQIRDIIDGQMQVEGDLRRVVTGNIKRLMDLGCYRGLRHRRGLPVRGQKTKTNARTRKGPRKTVAGKRK.

The segment at 94-122 (RGLPVRGQKTKTNARTRKGPRKTVAGKRK) is disordered.

The protein belongs to the universal ribosomal protein uS13 family. In terms of assembly, part of the 30S ribosomal subunit. Forms a loose heterodimer with protein S19. Forms two bridges to the 50S subunit in the 70S ribosome.

Located at the top of the head of the 30S subunit, it contacts several helices of the 16S rRNA. In the 70S ribosome it contacts the 23S rRNA (bridge B1a) and protein L5 of the 50S subunit (bridge B1b), connecting the 2 subunits; these bridges are implicated in subunit movement. Contacts the tRNAs in the A and P-sites. This Syntrophotalea carbinolica (strain DSM 2380 / NBRC 103641 / GraBd1) (Pelobacter carbinolicus) protein is Small ribosomal subunit protein uS13.